The primary structure comprises 366 residues: Phospho-N-acetylmuramoyl-pentapeptide-transferase (366 aa).

A run of 10 helical transmembrane segments spans residues 27 to 47 (AALFTSALIVFLFGPTIINSL), 71 to 91 (TPTMGGLMILAGIVGASLLWA), 93 to 113 (LSNVYVVATLLVTLGFGAIGF), 134 to 154 (LGIEFIIAGIAVYFMMRTALA), 174 to 194 (FLINLGIMFVVFGGFVIVGAG), 205 to 225 (GLAIVPVMIAAASFGVIAYLA), 245 to 265 (LAVVLGAVIGAGLGFLWFNAP), 268 to 288 (AIFMGDTGSLALGGTIGTVAV), 294 to 314 (IVMAIIGGLFVMETLSVIIQV), and 343 to 363 (QVVIRFWIIAVGLALLGLSTL).

This sequence belongs to the glycosyltransferase 4 family. MraY subfamily. It depends on Mg(2+) as a cofactor.

The protein localises to the cell inner membrane. It carries out the reaction UDP-N-acetyl-alpha-D-muramoyl-L-alanyl-gamma-D-glutamyl-meso-2,6-diaminopimeloyl-D-alanyl-D-alanine + di-trans,octa-cis-undecaprenyl phosphate = di-trans,octa-cis-undecaprenyl diphospho-N-acetyl-alpha-D-muramoyl-L-alanyl-D-glutamyl-meso-2,6-diaminopimeloyl-D-alanyl-D-alanine + UMP. The protein operates within cell wall biogenesis; peptidoglycan biosynthesis. Its function is as follows. Catalyzes the initial step of the lipid cycle reactions in the biosynthesis of the cell wall peptidoglycan: transfers peptidoglycan precursor phospho-MurNAc-pentapeptide from UDP-MurNAc-pentapeptide onto the lipid carrier undecaprenyl phosphate, yielding undecaprenyl-pyrophosphoryl-MurNAc-pentapeptide, known as lipid I. This Rhizobium etli (strain CIAT 652) protein is Phospho-N-acetylmuramoyl-pentapeptide-transferase.